The primary structure comprises 142 residues: Large ribosomal subunit protein uL13 (142 aa).

It belongs to the universal ribosomal protein uL13 family. In terms of assembly, part of the 50S ribosomal subunit.

Functionally, this protein is one of the early assembly proteins of the 50S ribosomal subunit, although it is not seen to bind rRNA by itself. It is important during the early stages of 50S assembly. In Syntrophotalea carbinolica (strain DSM 2380 / NBRC 103641 / GraBd1) (Pelobacter carbinolicus), this protein is Large ribosomal subunit protein uL13.